We begin with the raw amino-acid sequence, 219 residues long: Orotate phosphoribosyltransferase (219 aa).

Lys-26 serves as a coordination point for 5-phospho-alpha-D-ribose 1-diphosphate. An orotate-binding site is contributed by 34–35; the sequence is FF. 5-phospho-alpha-D-ribose 1-diphosphate is bound by residues 72–73, Arg-98, Lys-99, Lys-102, His-104, and 124–132; these read YK and DDVITAGTA. The orotate site is built by Thr-128 and Arg-156.

Belongs to the purine/pyrimidine phosphoribosyltransferase family. PyrE subfamily. As to quaternary structure, homodimer. Requires Mg(2+) as cofactor.

It carries out the reaction orotidine 5'-phosphate + diphosphate = orotate + 5-phospho-alpha-D-ribose 1-diphosphate. It functions in the pathway pyrimidine metabolism; UMP biosynthesis via de novo pathway; UMP from orotate: step 1/2. Catalyzes the transfer of a ribosyl phosphate group from 5-phosphoribose 1-diphosphate to orotate, leading to the formation of orotidine monophosphate (OMP). In Stenotrophomonas maltophilia (strain R551-3), this protein is Orotate phosphoribosyltransferase.